We begin with the raw amino-acid sequence, 308 residues long: Coenzyme PQQ synthesis protein B (308 aa).

It belongs to the PqqB family.

Its pathway is cofactor biosynthesis; pyrroloquinoline quinone biosynthesis. In terms of biological role, may be involved in the transport of PQQ or its precursor to the periplasm. This Rhodopseudomonas palustris (strain BisB5) protein is Coenzyme PQQ synthesis protein B.